We begin with the raw amino-acid sequence, 677 residues long: Beta-galactosidase (677 aa).

The N-terminal stretch at 1 to 23 (MPGFLVRILPLLLVLLLLGPTRG) is a signal peptide. Positions 24–28 (LRNAT) are excised as a propeptide. An N-linked (GlcNAc...) asparagine glycan is attached at Asn26. Positions 83, 129, and 187 each coordinate substrate. Glu188 functions as the Proton donor in the catalytic mechanism. A disulfide bridge connects residues Cys195 and Cys230. Asn247 carries N-linked (GlcNAc...) asparagine glycosylation. Catalysis depends on Glu268, which acts as the Nucleophile. Tyr333 lines the substrate pocket. N-linked (GlcNAc...) asparagine glycosylation is found at Asn464, Asn498, Asn542, Asn545, and Asn555. Cys626 and Cys634 are joined by a disulfide. Positions 650 to 677 (YDHPSKPVEKRLMPPPPQKNKDSWLDHV) are disordered. Basic and acidic residues-rich tracts occupy residues 652-661 (HPSKPVEKRL) and 668-677 (KNKDSWLDHV).

This sequence belongs to the glycosyl hydrolase 35 family. As to quaternary structure, homodimer. May form higher multimers. As to expression, detected in placenta (at protein level). Detected in fibroblasts and testis.

It localises to the lysosome. It is found in the cytoplasm. The protein localises to the perinuclear region. It catalyses the reaction Hydrolysis of terminal non-reducing beta-D-galactose residues in beta-D-galactosides.. In terms of biological role, cleaves beta-linked terminal galactosyl residues from gangliosides, glycoproteins, and glycosaminoglycans. Has no beta-galactosidase catalytic activity, but plays functional roles in the formation of extracellular elastic fibers (elastogenesis) and in the development of connective tissue. Seems to be identical to the elastin-binding protein (EBP), a major component of the non-integrin cell surface receptor expressed on fibroblasts, smooth muscle cells, chondroblasts, leukocytes, and certain cancer cell types. In elastin producing cells, associates with tropoelastin intracellularly and functions as a recycling molecular chaperone which facilitates the secretions of tropoelastin and its assembly into elastic fibers. The sequence is that of Beta-galactosidase (GLB1) from Homo sapiens (Human).